We begin with the raw amino-acid sequence, 1133 residues long: Error-prone DNA polymerase (1133 aa).

This sequence belongs to the DNA polymerase type-C family. DnaE2 subfamily.

Its subcellular location is the cytoplasm. It catalyses the reaction DNA(n) + a 2'-deoxyribonucleoside 5'-triphosphate = DNA(n+1) + diphosphate. Functionally, DNA polymerase involved in damage-induced mutagenesis and translesion synthesis (TLS). It is not the major replicative DNA polymerase. The polypeptide is Error-prone DNA polymerase (Anaeromyxobacter sp. (strain K)).